A 320-amino-acid chain; its full sequence is ATP-dependent 6-phosphofructokinase (320 aa).

Position 12 (Gly-12) interacts with ATP. Residues 22–26 and 55–60 contribute to the ADP site; these read RGVVR and RYSVSD. ATP is bound by residues 73–74 and 103–106; these read RF and GDGS. Asp-104 serves as a coordination point for Mg(2+). 126 to 128 lines the substrate pocket; it reads TID. The active-site Proton acceptor is the Asp-128. Residue Arg-155 coordinates ADP. Residues Arg-163 and 170 to 172 contribute to the substrate site; that span reads MGR. ADP contacts are provided by residues 186 to 188, Lys-212, and 214 to 216; these read GCE and KKH. Substrate-binding positions include Glu-223, Arg-244, and 250-253; that span reads HIQR.

It belongs to the phosphofructokinase type A (PFKA) family. ATP-dependent PFK group I subfamily. Prokaryotic clade 'B1' sub-subfamily. As to quaternary structure, homotetramer. Requires Mg(2+) as cofactor.

Its subcellular location is the cytoplasm. The catalysed reaction is beta-D-fructose 6-phosphate + ATP = beta-D-fructose 1,6-bisphosphate + ADP + H(+). The protein operates within carbohydrate degradation; glycolysis; D-glyceraldehyde 3-phosphate and glycerone phosphate from D-glucose: step 3/4. Allosterically activated by ADP and other diphosphonucleosides, and allosterically inhibited by phosphoenolpyruvate. Functionally, catalyzes the phosphorylation of D-fructose 6-phosphate to fructose 1,6-bisphosphate by ATP, the first committing step of glycolysis. The chain is ATP-dependent 6-phosphofructokinase from Citrobacter koseri (strain ATCC BAA-895 / CDC 4225-83 / SGSC4696).